Reading from the N-terminus, the 265-residue chain is Histidine racemase (265 aa).

The active-site Proton acceptor is Cys67. Catalysis depends on Cys209, which acts as the Proton donor.

The protein belongs to the histidine racemase family. As to quaternary structure, homodimer.

The catalysed reaction is L-histidine = D-histidine. Its activity is regulated as follows. Activity is not affected by buffer composition (PO(4) or Tris), ions (SO(4)(2-), Mg(2+) and EDTA) or the PLP inhibitor hydroxylamine. However, the activity is hindered by iodoacetamide and Hg(2+), which are known inhibitors of enzymes with catalytic thiols. Functionally, cofactor-independent isomerase that catalyzes the reversible conversion of L-histidine to D-histidine. Shows weak activity with L,L-lanthionine. The catalytic turnover is 10'000-fold faster with L-histidine than with L,L-lanthionine. May play a role in growth of F.nucleatum. In Fusobacterium nucleatum subsp. nucleatum (strain ATCC 25586 / DSM 15643 / BCRC 10681 / CIP 101130 / JCM 8532 / KCTC 2640 / LMG 13131 / VPI 4355), this protein is Histidine racemase.